A 434-amino-acid chain; its full sequence is Tol-Pal system protein TolB (434 aa).

Positions 1-21 (MIVRRALALAALALAASPALA) are cleaved as a signal peptide. A disordered region spans residues 411 to 434 (GDRQTPVTSGKTDLAAPAWGPLAP).

The protein belongs to the TolB family. In terms of assembly, the Tol-Pal system is composed of five core proteins: the inner membrane proteins TolA, TolQ and TolR, the periplasmic protein TolB and the outer membrane protein Pal. They form a network linking the inner and outer membranes and the peptidoglycan layer.

The protein localises to the periplasm. Functionally, part of the Tol-Pal system, which plays a role in outer membrane invagination during cell division and is important for maintaining outer membrane integrity. The polypeptide is Tol-Pal system protein TolB (Anaeromyxobacter dehalogenans (strain 2CP-C)).